Reading from the N-terminus, the 554-residue chain is Glucose-6-phosphate isomerase (554 aa).

The active-site Proton donor is the E359. Catalysis depends on residues H390 and K518.

This sequence belongs to the GPI family.

It localises to the cytoplasm. It catalyses the reaction alpha-D-glucose 6-phosphate = beta-D-fructose 6-phosphate. The protein operates within carbohydrate biosynthesis; gluconeogenesis. It functions in the pathway carbohydrate degradation; glycolysis; D-glyceraldehyde 3-phosphate and glycerone phosphate from D-glucose: step 2/4. Its function is as follows. Catalyzes the reversible isomerization of glucose-6-phosphate to fructose-6-phosphate. The sequence is that of Glucose-6-phosphate isomerase from Pseudomonas putida (strain GB-1).